The chain runs to 306 residues: Pantothenate kinase (306 aa).

91-98 contributes to the ATP binding site; sequence GSVAVGKS.

This sequence belongs to the prokaryotic pantothenate kinase family.

It is found in the cytoplasm. The enzyme catalyses (R)-pantothenate + ATP = (R)-4'-phosphopantothenate + ADP + H(+). The protein operates within cofactor biosynthesis; coenzyme A biosynthesis; CoA from (R)-pantothenate: step 1/5. This Streptococcus gordonii (strain Challis / ATCC 35105 / BCRC 15272 / CH1 / DL1 / V288) protein is Pantothenate kinase.